The following is a 305-amino-acid chain: Protoheme IX farnesyltransferase (305 aa).

Transmembrane regions (helical) follow at residues 26–46 (VMSL…QPVN), 47–67 (PFVA…SGAL), 98–118 (LAVG…AANW), 119–139 (FAAG…TIWL), 147–167 (IVIG…CATG), 174–194 (LLMF…LALF), 220–240 (IFAY…TSVG), 243–263 (LYLA…WQIL), and 284–304 (LSLY…WVGG).

This sequence belongs to the UbiA prenyltransferase family. Protoheme IX farnesyltransferase subfamily. In terms of assembly, interacts with CtaA.

The protein localises to the cell inner membrane. It carries out the reaction heme b + (2E,6E)-farnesyl diphosphate + H2O = Fe(II)-heme o + diphosphate. It functions in the pathway porphyrin-containing compound metabolism; heme O biosynthesis; heme O from protoheme: step 1/1. Its function is as follows. Converts heme B (protoheme IX) to heme O by substitution of the vinyl group on carbon 2 of heme B porphyrin ring with a hydroxyethyl farnesyl side group. The chain is Protoheme IX farnesyltransferase from Paracoccus denitrificans (strain Pd 1222).